Reading from the N-terminus, the 506-residue chain is WD repeat-containing protein 55 homolog (506 aa).

Basic and acidic residues predominate over residues Met1–Ala11. 3 disordered regions span residues Met1 to Asp20, Gln33 to Ser87, and Ala100 to Asp132. Acidic residues predominate over residues Gln33–Leu48. The span at Gly61–Ser74 shows a compositional bias: low complexity. Positions Asn78–Ser87 are enriched in acidic residues. WD repeat units lie at residues Arg156–Leu195, Val200–Leu239, Ala243–Glu281, Glu284–Gln323, Pro326–Asp365, and Gln410–Asp449. Positions Asp480 to Thr506 are disordered. Low complexity predominate over residues Gly493 to Thr506.

The protein belongs to the WD repeat WDR55 family.

This Drosophila mojavensis (Fruit fly) protein is WD repeat-containing protein 55 homolog.